A 96-amino-acid polypeptide reads, in one-letter code: Co-chaperonin GroES (96 aa).

It belongs to the GroES chaperonin family. In terms of assembly, heptamer of 7 subunits arranged in a ring. Interacts with the chaperonin GroEL.

It is found in the cytoplasm. Together with the chaperonin GroEL, plays an essential role in assisting protein folding. The GroEL-GroES system forms a nano-cage that allows encapsulation of the non-native substrate proteins and provides a physical environment optimized to promote and accelerate protein folding. GroES binds to the apical surface of the GroEL ring, thereby capping the opening of the GroEL channel. This is Co-chaperonin GroES from Legionella pneumophila (strain Paris).